Here is a 175-residue protein sequence, read N- to C-terminus: Peptide deformylase (175 aa).

Residues Cys99 and His141 each contribute to the Fe cation site. The active site involves Glu142. A Fe cation-binding site is contributed by His145.

The protein belongs to the polypeptide deformylase family. The cofactor is Fe(2+).

It carries out the reaction N-terminal N-formyl-L-methionyl-[peptide] + H2O = N-terminal L-methionyl-[peptide] + formate. Its function is as follows. Removes the formyl group from the N-terminal Met of newly synthesized proteins. Requires at least a dipeptide for an efficient rate of reaction. N-terminal L-methionine is a prerequisite for activity but the enzyme has broad specificity at other positions. The sequence is that of Peptide deformylase from Rickettsia canadensis (strain McKiel).